The sequence spans 2194 residues: PDZ and LIM domain protein Zasp (2194 aa).

The 83-residue stretch at 8-90 folds into the PDZ domain; sequence QIKLSRFDAQ…NFVITVQRGG (83 aa). A disordered region spans residues 211 to 277; the sequence is TGQSTPAFGN…KPPSTGGLPT (67 aa). Residues 228–253 show a composition bias toward low complexity; sequence PQQLQQPQQQYNQHQQHYHQQQQQQQ. Residues 280-339 form the LIM zinc-binding 1 domain; sequence NICTECERLITGVFVRIKDKNLHVECFKCATCGTSLKNQGYYNFNNKLYCDIHAKQAAIN. Residues 415–435 show a composition bias toward low complexity; it reads AATPQAATATDSPAATASSSD. 11 disordered regions span residues 415 to 436, 457 to 476, 511 to 558, 580 to 611, 623 to 692, 896 to 940, 1223 to 1260, 1297 to 1322, 1550 to 1632, 1646 to 1738, and 1815 to 1837; these read AATP…SSDN, VALA…DQPF, GAAA…AVEE, SRQS…YIPP, VQQV…TTSE, AAAA…PRGS, LTQK…QRTQ, QSQS…PPAN, LNAS…QQPE, QREQ…YGKT, and APPP…SGYQ. Positions 515-530 are enriched in low complexity; sequence PKSPVSYPPQQQQQSP. 2 stretches are compositionally biased toward polar residues: residues 580-590 and 644-667; these read SRQSQRGSSFT and VGTS…TASA. The segment covering 676-692 has biased composition (low complexity); sequence SSDSYTSTSTTTTTTSE. The segment covering 1598 to 1610 has biased composition (polar residues); the sequence is QTGSITTGQSYQG. 3 stretches are compositionally biased toward low complexity: residues 1616–1630, 1646–1668, and 1699–1727; these read SEQS…YNQQ, QREQ…TRSQ, and SQSV…QNQS. LIM zinc-binding domains follow at residues 2018-2078, 2079-2138, and 2139-2194; these read PLCN…KYLA, PTCS…LFTT, and KCFA…NHAR.

In terms of assembly, interacts with alpha-actinin (Actn). As to expression, expression is first detected in the proctodeum and the midgut primordium. In stage 11 embryos, expression is predominant in the leading edge of epidermal cells adjacent to the amnioserosa. Stage 12 embryos exhibit expression in the midgut and the leading edge. Expressed in several rows of germ band cells next to the leading edge at stage 14. Strong expression is visible in the midgut and pharyngeal muscles of stage 17 embryos. Also expressed in somatic muscles and visceral mesoderm. Colocalizes with mys (beta PS integrin) in myotendinous junctions and with Actn in muscle Z lines.

It is found in the cytoplasm. The protein localises to the cytoskeleton. Regulator of cell matrix adhesion having two related functions, one upstream of Actn organizing the Z line and the other downstream of integrins regulating assembly of integrin adhesion sites. Also required for the formation of myotendinous junctions in muscles. This Drosophila melanogaster (Fruit fly) protein is PDZ and LIM domain protein Zasp (Zasp52).